A 61-amino-acid chain; its full sequence is Short neurotoxin 1 (61 aa).

4 disulfide bridges follow: C3/C23, C17/C40, C42/C53, and C54/C59.

It belongs to the three-finger toxin family. Short-chain subfamily. Type I alpha-neurotoxin sub-subfamily. As to expression, expressed by the venom gland.

It is found in the secreted. In terms of biological role, binds to muscle nicotinic acetylcholine receptor (nAChR) and inhibit acetylcholine from binding to the receptor, thereby impairing neuromuscular transmission. The chain is Short neurotoxin 1 from Naja philippinensis (Philippine cobra).